The chain runs to 234 residues: Large ribosomal subunit protein uL1 (234 aa).

Belongs to the universal ribosomal protein uL1 family. In terms of assembly, part of the 50S ribosomal subunit.

Its function is as follows. Binds directly to 23S rRNA. The L1 stalk is quite mobile in the ribosome, and is involved in E site tRNA release. Functionally, protein L1 is also a translational repressor protein, it controls the translation of the L11 operon by binding to its mRNA. The polypeptide is Large ribosomal subunit protein uL1 (Cronobacter sakazakii (strain ATCC BAA-894) (Enterobacter sakazakii)).